The sequence spans 450 residues: MTWSTSFLSVHFFAFITTSIHAQLTGSVGPLTSVSDKAAVKTCNVLDYGARSDNTTDVGQPIIDAFADCGSGGLIYIPEGDYLLKNWISLENGSAWAIQLDGVLYRDSSPSSQSYMFEISGGRDFELFSSNATGAIQGSGYLYHRDDTYTGPRMLHISGVSDWSVHDLVLVDSPMFHFVIDGGYNGEVYNMAIRGADHGGLDGIDVYGDNMWIHDIMVTNKDECVTTKTNSHNFLIENIYCNSSGGCAIGSLGSGANVSNIVYRNVYTWDSNQMMMIKSNGGSGDVSNAVFENFIGHGNAYSLDLDSYWSSMDAIDGDGIYYHNITFQNWTGTAVDGETRPPIRVICPEDTPCTEIALVQIDLWVEEGGYDEYICKNAYGSGYCLDSATGTSTPYTTTTYVNSAPTGYEAPTMTDDLATAFGTSASIPIPTIPASFFPGVTPISAVAGSS.

Positions 1–22 (MTWSTSFLSVHFFAFITTSIHA) are cleaved as a signal peptide. Cysteines 43 and 69 form a disulfide. Residues Asn-54, Asn-92, and Asn-131 are each glycosylated (N-linked (GlcNAc...) asparagine). Catalysis depends on Asp-222, which acts as the Proton donor. A disulfide bridge links Cys-224 with Cys-241. N-linked (GlcNAc...) asparagine glycosylation is found at Asn-242 and Asn-257. His-297 is a catalytic residue. Asn-324 and Asn-329 each carry an N-linked (GlcNAc...) asparagine glycan. 2 disulfide bridges follow: Cys-347–Cys-353 and Cys-375–Cys-384.

It belongs to the glycosyl hydrolase 28 family.

The protein resides in the secreted. In terms of biological role, pectinolytic enzymes consist of four classes of enzymes: pectine lyase, polygalacturonase, pectin methylesterase and rhamnogalacturonase. Hydrolyzes alpha-D-galacturonopyranosyl-(1,2)-alpha-L-rhamnopyranosyl linkages in the backbone of the hairy regions of pectins. The protein is Probable rhamnogalacturonase E (rhgE) of Aspergillus niger.